A 442-amino-acid polypeptide reads, in one-letter code: tRNA modification GTPase MnmE (442 aa).

3 residues coordinate (6S)-5-formyl-5,6,7,8-tetrahydrofolate: arginine 21, glutamate 79, and lysine 118. Residues 214-367 (GFKIAIIGKP…LKEELQNYLN (154 aa)) form the TrmE-type G domain. A K(+)-binding site is contributed by asparagine 224. GTP is bound by residues 224–229 (NVGKSS), 243–249 (SDIAGTT), and 268–271 (DTAG). Serine 228 provides a ligand contact to Mg(2+). K(+) contacts are provided by serine 243, isoleucine 245, and threonine 248. A Mg(2+)-binding site is contributed by threonine 249. Residue lysine 442 coordinates (6S)-5-formyl-5,6,7,8-tetrahydrofolate.

This sequence belongs to the TRAFAC class TrmE-Era-EngA-EngB-Septin-like GTPase superfamily. TrmE GTPase family. In terms of assembly, homodimer. Heterotetramer of two MnmE and two MnmG subunits. K(+) is required as a cofactor.

The protein resides in the cytoplasm. In terms of biological role, exhibits a very high intrinsic GTPase hydrolysis rate. Involved in the addition of a carboxymethylaminomethyl (cmnm) group at the wobble position (U34) of certain tRNAs, forming tRNA-cmnm(5)s(2)U34. The chain is tRNA modification GTPase MnmE from Campylobacter jejuni subsp. doylei (strain ATCC BAA-1458 / RM4099 / 269.97).